The sequence spans 213 residues: Small ribosomal subunit protein uS3c (213 aa).

Residues 39 to 109 form the KH type-2 domain; it reads IRKYLNAKLA…KFRITITYLQ (71 aa).

It belongs to the universal ribosomal protein uS3 family. Part of the 30S ribosomal subunit.

It is found in the plastid. It localises to the chloroplast. The chain is Small ribosomal subunit protein uS3c (rps3) from Mesostigma viride (Green alga).